Consider the following 481-residue polypeptide: Keratin, type II cuticular Hb1 (481 aa).

Residues Met-1–Glu-106 are head. Residues Glu-106 to Leu-417 form the IF rod domain. Positions Lys-107 to Tyr-141 are coil 1A. Positions Gln-142 to Met-151 are linker 1. Positions Glu-152 to Ser-252 are coil 1B. Residue Lys-212 forms a Glycyl lysine isopeptide (Lys-Gly) (interchain with G-Cter in SUMO1) linkage. The segment at His-253 to Leu-269 is linker 12. Positions Asn-270–Glu-413 are coil 2. The tail stretch occupies residues Glu-414–Cys-481.

The protein belongs to the intermediate filament family. In terms of assembly, heterotetramer of two type I and two type II keratins. Expressed in dorsal skin.

In Mus musculus (Mouse), this protein is Keratin, type II cuticular Hb1.